We begin with the raw amino-acid sequence, 179 residues long: Large ribosomal subunit protein uL5 (179 aa).

The protein belongs to the universal ribosomal protein uL5 family. Part of the 50S ribosomal subunit; part of the 5S rRNA/L5/L18/L25 subcomplex. Contacts the 5S rRNA and the P site tRNA. Forms a bridge to the 30S subunit in the 70S ribosome.

Its function is as follows. This is one of the proteins that bind and probably mediate the attachment of the 5S RNA into the large ribosomal subunit, where it forms part of the central protuberance. In the 70S ribosome it contacts protein S13 of the 30S subunit (bridge B1b), connecting the 2 subunits; this bridge is implicated in subunit movement. Contacts the P site tRNA; the 5S rRNA and some of its associated proteins might help stabilize positioning of ribosome-bound tRNAs. The chain is Large ribosomal subunit protein uL5 from Neisseria gonorrhoeae (strain ATCC 700825 / FA 1090).